Consider the following 188-residue polypeptide: dCTP deaminase (188 aa).

DCTP is bound by residues 111 to 116 (KSTYAR), 135 to 137 (TLE), Gln156, Tyr170, and Gln180. Catalysis depends on Glu137, which acts as the Proton donor/acceptor.

This sequence belongs to the dCTP deaminase family. In terms of assembly, homotrimer.

It catalyses the reaction dCTP + H2O + H(+) = dUTP + NH4(+). It participates in pyrimidine metabolism; dUMP biosynthesis; dUMP from dCTP (dUTP route): step 1/2. In terms of biological role, catalyzes the deamination of dCTP to dUTP. This is dCTP deaminase from Pseudomonas syringae pv. tomato (strain ATCC BAA-871 / DC3000).